We begin with the raw amino-acid sequence, 419 residues long: C2 calcium-dependent domain-containing protein 4C (419 aa).

Disordered regions lie at residues 1 to 96, 115 to 136, 151 to 225, and 247 to 300; these read MRKT…LASE, EDWTAEEATNADPQAQGAMSLP, AESP…SPFG, and VSQL…HTVK. Residues 75–94 are compositionally biased toward low complexity; sequence LASPGPRRAPRSPRLPAKLA. The span at 186–196 shows a compositional bias: gly residues; that stretch reads KGNGGDGGSRE. Over residues 212-225 the composition is skewed to polar residues; that stretch reads ESDTGSSAESSPFG. Residues Ser-259, Ser-261, and Ser-270 each carry the phosphoserine modification. In terms of domain architecture, C2 spans 303–419; sequence TRGSVRLLAE…LPLTSLLPFL (117 aa).

The protein belongs to the C2CD4 family.

The polypeptide is C2 calcium-dependent domain-containing protein 4C (C2cd4c) (Mus musculus (Mouse)).